Here is a 350-residue protein sequence, read N- to C-terminus: Putative zinc metalloprotease jhp_0242 (350 aa).

Histidine 16 is a Zn(2+) binding site. Glutamate 17 is an active-site residue. Histidine 20 is a Zn(2+) binding site. 5 consecutive transmembrane segments (helical) span residues 43–63 (WFFK…GGYV), 94–114 (LWIL…VYFF), 249–269 (LIMG…VGAL), 277–297 (MLLL…LLPI), and 326–346 (LWLV…FNDI). The region spanning 108-177 (AVLVYFFLAL…GELILEIERN (70 aa)) is the PDZ domain.

This sequence belongs to the peptidase M50B family. Requires Zn(2+) as cofactor.

It localises to the cell inner membrane. The protein is Putative zinc metalloprotease jhp_0242 of Helicobacter pylori (strain J99 / ATCC 700824) (Campylobacter pylori J99).